Consider the following 762-residue polypeptide: MRLWKAVVVTLAFVSTDVGVTTAIYAFSHLDRSLLEDIRHFNIFDSVLDLWAACLYRSCLLLGATIGVAKNSALGPRRLRASWLVITLVCLFVGIYAMAKLLLFSEVRRPIRDPWFWALFVWTYISLAASFLLWGLLATVRPDAEALEPGNEGFHGEGGAPAEQASGATLQKLLSYTKPDVAFLVAASFFLIVAALGETFLPYYTGRAIDSIVIQKSMDQFTTAVVVVCLLAIGSSLAAGIRGGIFTLVFARLNIRLRNCLFRSLVSQETSFFDENRTGDLISRLTSDTTMVSDLVSQNINIFLRNTVKVTGVVVFMFSLSWQLSLVTFMGFPIIMMVSNIYGKYYKRLSKEVQSALARASTTAEETISAMKTVRSFANEEEEAEVFLRKLQQVYKLNRKEAAAYMSYVWGSGLTLLVVQVSILYYGGHLVISGQMSSGNLIAFIIYEFVLGDCMESVGSVYSGLMQGVGAAEKVFEFIDRQPTMVHDGSLAPDHLEGRVDFENVTFTYRTRPHTQVLQNVSFSLSPGKVTALVGPSGSGKSSCVNILENFYPLQGGRVLLDGKPIGAYDHKYLHRVISLVSQEPVLFARSITDNISYGLPTVPFEMVVEAAQKANAHGFIMELQDGYSTETGEKGAQLSGGQKQRVAMARALVRNPPVLILDEATSALDAESEYLIQQAIHGNLQRHTVLIIAHRLSTVERAHLIVVLDKGRVVQQGTHQQLLAQGGLYAKLVQRQMLGLEHPLDYTASHKEPPSNTEHKA.

Helical transmembrane passes span 7–27, 47–67, 84–104, 116–136, 181–201, 221–241, 315–335, and 412–432; these read VVVTLAFVSTDVGVTTAIYAF, VLDLWAACLYRSCLLLGATIG, LVITLVCLFVGIYAMAKLLLF, FWALFVWTYISLAASFLLWGL, VAFLVAASFFLIVAALGETFL, FTTAVVVVCLLAIGSSLAAGI, VFMFSLSWQLSLVTFMGFPII, and SGLTLLVVQVSILYYGGHLVI. Positions 184-467 constitute an ABC transmembrane type-1 domain; sequence LVAASFFLIV…VGSVYSGLMQ (284 aa). An ABC transporter domain is found at 500 to 736; that stretch reads VDFENVTFTY…GGLYAKLVQR (237 aa). 535–542 serves as a coordination point for ATP; that stretch reads GPSGSGKS.

Belongs to the ABC transporter superfamily. ABCB family. MHC peptide exporter (TC 3.A.1.209) subfamily. Homodimer. Interacts (via TMD0 region) with LAMP1; this interaction strongly stabilizes ABCB9 and protects ABCB9 against lysosomal degradation. Interacts (via TMD0 region) with LAMP2 (isoform LAMP-2B). Interacts (via TMD0) with YIF1B; this interaction allows (but is not essential) the ER-to-Golgi trafficking and strongly depends on a salt bridge within TMD0. As to expression, highly expressed in testis, particularly in the Sertoli cells of the seminiferous tubules, and at moderate levels in brain and spinal cord.

The protein localises to the lysosome membrane. It carries out the reaction a [oligopeptide](in) + ATP + H2O = a [oligopeptide](out) + ADP + phosphate + H(+). Functionally, ATP-dependent low-affinity peptide transporter which translocates a broad spectrum of peptides from the cytosol to the lysosomal lumen for degradation. Displays a broad peptide length specificity from 6-mer up to at least 59-mer peptides with an optimum of 23-mers. Binds and transports smaller and larger peptides with the same affinity. Favors positively charged, aromatic or hydrophobic residues in the N- and C-terminal positions whereas negatively charged residues as well as asparagine and methionine are not favored. This chain is ABC-type oligopeptide transporter ABCB9, found in Mus musculus (Mouse).